A 308-amino-acid polypeptide reads, in one-letter code: Porphobilinogen deaminase (308 aa).

Residue Cys-241 is modified to S-(dipyrrolylmethanemethyl)cysteine.

The protein belongs to the HMBS family. As to quaternary structure, monomer. Dipyrromethane is required as a cofactor.

It catalyses the reaction 4 porphobilinogen + H2O = hydroxymethylbilane + 4 NH4(+). Its pathway is porphyrin-containing compound metabolism; protoporphyrin-IX biosynthesis; coproporphyrinogen-III from 5-aminolevulinate: step 2/4. Its function is as follows. Tetrapolymerization of the monopyrrole PBG into the hydroxymethylbilane pre-uroporphyrinogen in several discrete steps. In Staphylococcus aureus (strain Newman), this protein is Porphobilinogen deaminase.